The following is a 333-amino-acid chain: Probable malate dehydrogenase 3 (333 aa).

Residue 12–18 (GAAGQIA) coordinates NAD(+). 2 residues coordinate substrate: Arg-93 and Arg-99. NAD(+)-binding positions include Asn-106, Gln-113, and 130–132 (VGN). Substrate-binding residues include Asn-132 and Arg-163. The active-site Proton acceptor is the His-188.

This sequence belongs to the LDH/MDH superfamily. MDH type 2 family. Homodimer.

The catalysed reaction is (S)-malate + NAD(+) = oxaloacetate + NADH + H(+). In terms of biological role, catalyzes the reversible oxidation of malate to oxaloacetate. The protein is Probable malate dehydrogenase 3 (mdhC) of Dictyostelium discoideum (Social amoeba).